The chain runs to 430 residues: Tol-Pal system protein TolB (430 aa).

Residues 1–21 (MKQALRVAFGFLILWASVLHA) form the signal peptide.

This sequence belongs to the TolB family. As to quaternary structure, the Tol-Pal system is composed of five core proteins: the inner membrane proteins TolA, TolQ and TolR, the periplasmic protein TolB and the outer membrane protein Pal. They form a network linking the inner and outer membranes and the peptidoglycan layer.

The protein resides in the periplasm. In terms of biological role, part of the Tol-Pal system, which plays a role in outer membrane invagination during cell division and is important for maintaining outer membrane integrity. TolB occupies a key intermediary position in the Tol-Pal system because it communicates directly with both membrane-embedded components, Pal in the outer membrane and TolA in the inner membrane. In Shigella boydii serotype 4 (strain Sb227), this protein is Tol-Pal system protein TolB.